The following is a 421-amino-acid chain: Queuine tRNA-ribosyltransferase accessory subunit 2 (421 aa).

Zn(2+)-binding residues include Cys328, Cys330, Cys333, and His359.

The protein belongs to the queuine tRNA-ribosyltransferase family. QTRT2 subfamily. In terms of assembly, heterodimer of a catalytic subunit and an accessory subunit. Requires Zn(2+) as cofactor.

Its subcellular location is the cytoplasm. Its function is as follows. Non-catalytic subunit of the queuine tRNA-ribosyltransferase (TGT) that catalyzes the base-exchange of a guanine (G) residue with queuine (Q) at position 34 (anticodon wobble position) in tRNAs with GU(N) anticodons (tRNA-Asp, -Asn, -His and -Tyr), resulting in the hypermodified nucleoside queuosine (7-(((4,5-cis-dihydroxy-2-cyclopenten-1-yl)amino)methyl)-7-deazaguanosine). The polypeptide is Queuine tRNA-ribosyltransferase accessory subunit 2 (Aedes aegypti (Yellowfever mosquito)).